A 1196-amino-acid polypeptide reads, in one-letter code: Major DNA-binding protein (1196 aa).

Residues 499 to 512 (CNLCTFDTRHACVH) fold into a zinc finger. Short sequence motifs (required for filament formation) lie at residues 843-844 (FW) and 1142-1144 (FNF). The disordered stretch occupies residues 1158 to 1196 (GGPGAPGPAFAGRKRAFHGDDPFGEGPPDKKGDLTLDML). The required for nuclear localization stretch occupies residues 1170 to 1196 (RKRAFHGDDPFGEGPPDKKGDLTLDML). The span at 1174-1196 (FHGDDPFGEGPPDKKGDLTLDML) shows a compositional bias: basic and acidic residues.

It belongs to the herpesviridae major DNA-binding protein family. In terms of assembly, homooligomers. Forms double-helical filaments necessary for the formation of replication compartments within the host nucleus. Interacts with the origin-binding protein. Interacts with the helicase primase complex; this interaction stimulates primer synthesis activity of the helicase-primase complex. Interacts with the DNA polymerase. Interacts with the alkaline exonuclease; this interaction increases its nuclease processivity. Interacts with ICP27; this interaction plays a role in the stimulation of late gene transcription.

The protein resides in the host nucleus. Functionally, plays several crucial roles in viral infection. Participates in the opening of the viral DNA origin to initiate replication by interacting with the origin-binding protein. May disrupt loops, hairpins and other secondary structures present on ssDNA to reduce and eliminate pausing of viral DNA polymerase at specific sites during elongation. Promotes viral DNA recombination by performing strand-transfer, characterized by the ability to transfer a DNA strand from a linear duplex to a complementary single-stranded DNA circle. Can also catalyze the renaturation of complementary single strands. Additionally, reorganizes the host cell nucleus, leading to the formation of prereplicative sites and replication compartments. This process is driven by the protein which can form double-helical filaments in the absence of DNA. The polypeptide is Major DNA-binding protein (Homo sapiens (Human)).